The sequence spans 323 residues: Acetyl-coenzyme A carboxylase carboxyl transferase subunit alpha (323 aa).

In terms of domain architecture, CoA carboxyltransferase C-terminal spans 32 to 293 (NISEEVAKLQ…RKALAAQLES (262 aa)).

Belongs to the AccA family. In terms of assembly, acetyl-CoA carboxylase is a heterohexamer composed of biotin carboxyl carrier protein (AccB), biotin carboxylase (AccC) and two subunits each of ACCase subunit alpha (AccA) and ACCase subunit beta (AccD).

Its subcellular location is the cytoplasm. The catalysed reaction is N(6)-carboxybiotinyl-L-lysyl-[protein] + acetyl-CoA = N(6)-biotinyl-L-lysyl-[protein] + malonyl-CoA. Its pathway is lipid metabolism; malonyl-CoA biosynthesis; malonyl-CoA from acetyl-CoA: step 1/1. Functionally, component of the acetyl coenzyme A carboxylase (ACC) complex. First, biotin carboxylase catalyzes the carboxylation of biotin on its carrier protein (BCCP) and then the CO(2) group is transferred by the carboxyltransferase to acetyl-CoA to form malonyl-CoA. The chain is Acetyl-coenzyme A carboxylase carboxyl transferase subunit alpha from Alcanivorax borkumensis (strain ATCC 700651 / DSM 11573 / NCIMB 13689 / SK2).